Here is a 568-residue protein sequence, read N- to C-terminus: Dihydroxy-acid dehydratase 1 (568 aa).

The tract at residues 1–22 (MAEQTNTPDLKPRSRDVTDGLE) is disordered. Basic and acidic residues predominate over residues 10-22 (LKPRSRDVTDGLE). Residue C57 participates in [2Fe-2S] cluster binding. D89 is a binding site for Mg(2+). C130 is a [2Fe-2S] cluster binding site. The Mg(2+) site is built by D131 and K132. K132 is modified (N6-carboxylysine). C207 is a [2Fe-2S] cluster binding site. Mg(2+) is bound at residue E458. Catalysis depends on S484, which acts as the Proton acceptor.

This sequence belongs to the IlvD/Edd family. Homodimer. [2Fe-2S] cluster is required as a cofactor. Mg(2+) serves as cofactor.

The enzyme catalyses (2R)-2,3-dihydroxy-3-methylbutanoate = 3-methyl-2-oxobutanoate + H2O. The catalysed reaction is (2R,3R)-2,3-dihydroxy-3-methylpentanoate = (S)-3-methyl-2-oxopentanoate + H2O. It functions in the pathway amino-acid biosynthesis; L-isoleucine biosynthesis; L-isoleucine from 2-oxobutanoate: step 3/4. It participates in amino-acid biosynthesis; L-valine biosynthesis; L-valine from pyruvate: step 3/4. Its function is as follows. Functions in the biosynthesis of branched-chain amino acids. Catalyzes the dehydration of (2R,3R)-2,3-dihydroxy-3-methylpentanoate (2,3-dihydroxy-3-methylvalerate) into 2-oxo-3-methylpentanoate (2-oxo-3-methylvalerate) and of (2R)-2,3-dihydroxy-3-methylbutanoate (2,3-dihydroxyisovalerate) into 2-oxo-3-methylbutanoate (2-oxoisovalerate), the penultimate precursor to L-isoleucine and L-valine, respectively. This chain is Dihydroxy-acid dehydratase 1, found in Nocardia farcinica (strain IFM 10152).